Reading from the N-terminus, the 657-residue chain is Glycogen debranching enzyme (657 aa).

Asp336 acts as the Nucleophile in catalysis. Residue Glu371 is the Proton donor of the active site. Positions 458–467 are enriched in basic and acidic residues; it reads NEANGEENRD. A disordered region spans residues 458-479; sequence NEANGEENRDGTNNNYSNNHGK.

It belongs to the glycosyl hydrolase 13 family.

The enzyme catalyses Hydrolysis of (1-&gt;6)-alpha-D-glucosidic linkages to branches with degrees of polymerization of three or four glucose residues in limit dextrin.. It participates in glycan degradation; glycogen degradation. Its function is as follows. Removes maltotriose and maltotetraose chains that are attached by 1,6-alpha-linkage to the limit dextrin main chain, generating a debranched limit dextrin. The protein is Glycogen debranching enzyme of Escherichia coli (strain SE11).